A 366-amino-acid polypeptide reads, in one-letter code: Anthranilate phosphoribosyltransferase (366 aa).

5-phospho-alpha-D-ribose 1-diphosphate is bound by residues Gly-79, 82-83, Thr-87, 89-92, 107-115, and Ser-119; these read GD, NIST, and KHGNRAATS. Gly-79 is an anthranilate binding site. A Mg(2+)-binding site is contributed by Ser-91. Asn-110 contacts anthranilate. An anthranilate-binding site is contributed by Arg-165. Residues Asp-223 and Glu-224 each contribute to the Mg(2+) site. The tract at residues 342–366 is disordered; it reads ESLSGKSMSMRSRTSILSPASGERV. Residues 345–359 show a composition bias toward polar residues; sequence SGKSMSMRSRTSILS.

This sequence belongs to the anthranilate phosphoribosyltransferase family. As to quaternary structure, homodimer. Mg(2+) is required as a cofactor.

It catalyses the reaction N-(5-phospho-beta-D-ribosyl)anthranilate + diphosphate = 5-phospho-alpha-D-ribose 1-diphosphate + anthranilate. It participates in amino-acid biosynthesis; L-tryptophan biosynthesis; L-tryptophan from chorismate: step 2/5. Its function is as follows. Catalyzes the transfer of the phosphoribosyl group of 5-phosphorylribose-1-pyrophosphate (PRPP) to anthranilate to yield N-(5'-phosphoribosyl)-anthranilate (PRA). The sequence is that of Anthranilate phosphoribosyltransferase from Methanosarcina barkeri (strain Fusaro / DSM 804).